The sequence spans 124 residues: Anamorsin homolog (124 aa).

Residues 1 to 20 are compositionally biased toward polar residues; sequence MSSPAPSTSHNAANSTQAFS. Disordered stretches follow at residues 1-39 and 40-124; these read MSSP…EDRE and AKST…TDDI. Residues C49, C56, C59, and C61 each contribute to the [2Fe-2S] cluster site. The fe-S binding site A stretch occupies residues 49-61; the sequence is CATRRRACKNCTC. [4Fe-4S] cluster contacts are provided by C86, C89, C97, and C100. 2 short sequence motifs (cx2C motif) span residues 86–89 and 97–100; these read CGNC and CAGC. The interval 86–100 is fe-S binding site B; the sequence is CGNCAKGDAFRCAGC.

The protein belongs to the anamorsin family. In terms of assembly, monomer. The cofactor is [2Fe-2S] cluster. [4Fe-4S] cluster serves as cofactor.

It localises to the cytoplasm. The protein resides in the mitochondrion intermembrane space. Component of the cytosolic iron-sulfur (Fe-S) protein assembly (CIA) machinery. Required for the maturation of extramitochondrial Fe-S proteins. Part of an electron transfer chain functioning in an early step of cytosolic Fe-S biogenesis, facilitating the de novo assembly of a [4Fe-4S] cluster on the cytosolic Fe-S scaffold complex. Electrons are transferred from NADPH via a FAD- and FMN-containing diflavin oxidoreductase. Together with the diflavin oxidoreductase, also required for the assembly of the diferric tyrosyl radical cofactor of ribonucleotide reductase (RNR), probably by providing electrons for reduction during radical cofactor maturation in the catalytic small subunit. This chain is Anamorsin homolog, found in Trypanosoma brucei brucei (strain 927/4 GUTat10.1).